A 460-amino-acid chain; its full sequence is MSTLDIAEDNKIKNEEFKIWKKSIPSLYQHISSLKPIFGSGVDESPSTLRSIVFTNDSSCNKSKGVLSVPLLYSQGSEIFEVDCIVPLGLHYKKPESISEPLVQPDYTMESQKVEQTVLIPKWEFKGETIAKMIYVDNSEINVKVIALSTNGSLAWFREGVKSPVYTMMEPSTSLSSASSGNQNKPCVDFAISNDSKTLTVTKEKHLDNENATIKLIDNSGKIGEVLRTIPVPGIKNIQEIKFLNNQIFATCSDDGIIRFWGNEIGKKPLWILNDSLDGKTTCFAASPFVDTLFMTGTSGGALKVWDIRAVIALGDADAELNINQGHNKVNELFKVHHFYSEQVSKIEFSSISPMEVVTIGGLGNVYHWNFEPVFAIYNEIHEDFQGIISDELEAESMAFYHTEGCRREIGENNKVNTVAYHKYIEDLVATVDSDGLLTVYKPFTGKVLDGSREVGAAKS.

The short motif at 14 to 22 (NEEFKIWKK) is the NEE-box element. WD repeat units follow at residues 233–271 (PGIKNIQEIKFLNNQIFATCSDDGIIRFWGNEIGKKPLW), 276–316 (SLDG…ALGD), 339–379 (FYSE…AIYN), and 411–451 (GENN…VLDG).

Component of the RPD3C(L) complex composed of at least ASH1, CTI6, DEP1, PHO23, RPD3, RXT2, RXT3, SAP30, SDS3, SIN3, UME1 and UME6. Component of the RPD3C(S) complex composed of at least EAF3, RCO1, RPD3, SIN3, and UME1. Interacts with RPD3.

The protein localises to the cytoplasm. It localises to the nucleus. Functionally, catalytic component of the RPD3 histone deacetylase complexes RPD3C(L) and RPD3C(S) responsible for the deacetylation of lysine residues on the N-terminal part of the core histones (H2A, H2B, H3 and H4). Histone deacetylation gives a tag for epigenetic repression and plays an important role in transcriptional regulation, cell cycle progression and developmental events. This chain is Transcriptional regulatory protein UME1 (UME1), found in Saccharomyces cerevisiae (strain ATCC 204508 / S288c) (Baker's yeast).